Here is a 284-residue protein sequence, read N- to C-terminus: Tropomyosin (284 aa).

Residues 1 to 284 adopt a coiled-coil conformation; sequence MDGIKKKMIA…DQTFAELTGY (284 aa). 2 stretches are compositionally biased toward basic and acidic residues: residues 29–42 and 111–136; these read LKQK…KETE and AKFD…RSIA. Disordered stretches follow at residues 29–49 and 111–149; these read LKQK…LNNR and AKFD…DQQK.

Belongs to the tropomyosin family.

Its function is as follows. Tropomyosin, in association with the troponin complex, plays a central role in the calcium dependent regulation of muscle contraction. This Clonorchis sinensis (Chinese liver fluke) protein is Tropomyosin.